Here is a 301-residue protein sequence, read N- to C-terminus: Acetylglutamate kinase (301 aa).

Residues 68–69, Arg90, and Asn195 each bind substrate; that span reads GG.

Belongs to the acetylglutamate kinase family. ArgB subfamily.

It localises to the cytoplasm. The enzyme catalyses N-acetyl-L-glutamate + ATP = N-acetyl-L-glutamyl 5-phosphate + ADP. It participates in amino-acid biosynthesis; L-arginine biosynthesis; N(2)-acetyl-L-ornithine from L-glutamate: step 2/4. Functionally, catalyzes the ATP-dependent phosphorylation of N-acetyl-L-glutamate. This is Acetylglutamate kinase from Pseudomonas putida (strain ATCC 700007 / DSM 6899 / JCM 31910 / BCRC 17059 / LMG 24140 / F1).